Here is a 216-residue protein sequence, read N- to C-terminus: Guanylate kinase (216 aa).

Residues 11–189 form the Guanylate kinase-like domain; it reads GVLIVISGPS…AVKKIEAILL (179 aa). 18 to 25 lines the ATP pocket; the sequence is GPSGAGKG.

Belongs to the guanylate kinase family.

The protein resides in the cytoplasm. The enzyme catalyses GMP + ATP = GDP + ADP. In terms of biological role, essential for recycling GMP and indirectly, cGMP. This Clostridium perfringens (strain SM101 / Type A) protein is Guanylate kinase.